A 176-amino-acid chain; its full sequence is MADFTLILAEGVVEPTAFGLDATVWVSIAMLVFLGILVWKGVPGAIAAMLDKRIAEISKQLGEAEQLRLDAESLKAEYEAKLADAAKEADEMRARADAEAQALVAKAKADATALIARRKQMAEDRIAAAEANALAEVRAAAVKAATEAAAKLIADRHDVAADKALVDQAIASIAKG.

The helical transmembrane segment at 18 to 38 threads the bilayer; it reads FGLDATVWVSIAMLVFLGILV.

Belongs to the ATPase B chain family. In terms of assembly, F-type ATPases have 2 components, F(1) - the catalytic core - and F(0) - the membrane proton channel. F(1) has five subunits: alpha(3), beta(3), gamma(1), delta(1), epsilon(1). F(0) has three main subunits: a(1), b(2) and c(10-14). The alpha and beta chains form an alternating ring which encloses part of the gamma chain. F(1) is attached to F(0) by a central stalk formed by the gamma and epsilon chains, while a peripheral stalk is formed by the delta and b chains.

Its subcellular location is the cell inner membrane. Its function is as follows. F(1)F(0) ATP synthase produces ATP from ADP in the presence of a proton or sodium gradient. F-type ATPases consist of two structural domains, F(1) containing the extramembraneous catalytic core and F(0) containing the membrane proton channel, linked together by a central stalk and a peripheral stalk. During catalysis, ATP synthesis in the catalytic domain of F(1) is coupled via a rotary mechanism of the central stalk subunits to proton translocation. In terms of biological role, component of the F(0) channel, it forms part of the peripheral stalk, linking F(1) to F(0). The protein is ATP synthase subunit b of Sphingopyxis alaskensis (strain DSM 13593 / LMG 18877 / RB2256) (Sphingomonas alaskensis).